Here is a 348-residue protein sequence, read N- to C-terminus: Short-chain dehydrogenase fogG (348 aa).

Positions 51, 75, 100, and 126 each coordinate NADP(+). Residues S180 and Y215 each act as proton donor in the active site. Positions 215 and 219 each coordinate NADP(+). Residue K219 is the Lowers pKa of active site Tyr of the active site.

Belongs to the short-chain dehydrogenases/reductases (SDR) family.

Its pathway is secondary metabolite biosynthesis. Short-chain dehydrogenase; part of the gene cluster that mediates the biosynthesis of flavoglaucin and congeners (including aspergin, dihydroauroglaucin and auroglaucin), prenylated salicylaldehyde derivatives carrying a saturated or an unsaturated C-7 side chain. The PKS fogA releases the carboxylic acid (8E,10E,12E)-3,5,7-trihydroxytetradeca-8,10,12-trienoic acid as its product, as well as derivatives with one and two double bonds. FogA is indeed able to reduce the initial triketide, thus being at least partially responsible for the differently saturated heptyl side chains of flavoglaucin congeners. The oxidoreductases fogB, fogC and fogD modify the nascent polyketide in fogA-bound form and, together, fogA, fogB, fogC and fogD are necessary for the formation of the aromatic core and the cyclized PKS products are released as salicyl alcohols. In particular, fogB is responsible for oxidation of a hydroxyl group or reduction of remaining double bond(s) at the C-7 residue whereas fogD is probably involved in the reductive release of the modified PKS products. The cytochrome P450 monooxygenase fogE is then responsible for the hydroxylation at C-3 of the benzene ring. The fogE products are substrates of the prenyltransferase fogH and the prenylated benzyl alcohols are subsequently oxidized by the fogF to produce the final aryl aldehydes flavoglaucin and congeners. The short-chain dehydrogenase fogG does not seem to be involved in the biosynthesis of the prenylated salicylaldehyde derivatives. The protein is Short-chain dehydrogenase fogG of Aspergillus ruber (strain CBS 135680).